An 873-amino-acid polypeptide reads, in one-letter code: V-type proton ATPase 116 kDa subunit a 2 (873 aa).

The Cytoplasmic segment spans residues 1 to 407 (MGSLSRSEEM…TIITFPFLFS (407 aa)). Residues 408–428 (CMFGDLGHGCIMLMAGLWFVL) form a helical membrane-spanning segment. The Lumenal portion of the chain corresponds to 429 to 445 (REKNLQARNIKDEIFNM). A helical transmembrane segment spans residues 446–466 (FFGGRYIILLMGLFSIHAGII). Topologically, residues 467 to 543 (YNDMFAKSFN…NKLNFLNSMK (77 aa)) are cytoplasmic. The helical transmembrane segment at 544–564 (MKLSVILGISQMTFGVILSFF) threads the bilayer. 2 N-linked (GlcNAc...) asparagine glycosylation sites follow: N565 and N569. Topologically, residues 565–574 (NHTYNKSKID) are lumenal. A helical membrane pass occupies residues 575 to 595 (IFTVFIPQMLFMGCIFMYLCL). The Cytoplasmic segment spans residues 596–614 (QIILKWLFFWTKEATVFGQ). The chain crosses the membrane as a helical span at residues 615–635 (IYPGSHCAPSLLIGLINMFMM). Residues 636–668 (KDRNAGFVVDGGKVNGEYREVETCYLSQWYPGQ) are Lumenal-facing. The helical transmembrane segment at 669–689 (SVIEMILVVIAVICVPVMLFG) threads the bilayer. Topologically, residues 690–785 (KPIHHVMQQK…LWALSLAHAQ (96 aa)) are cytoplasmic. Residues 786-806 (LSEVLWHMVFVTGGLGISGTA) traverse the membrane as a helical segment. Position 807 (G807) is a topological domain, lumenal. Residues 808–828 (FIAVYVVFFIFFVLTISILVL) form a helical membrane-spanning segment. At 829–873 (MEGLSAFLHTLRLHWVEFQSKFYLGLGYPFVPYSFKTALQEAEAA) the chain is on the cytoplasmic side.

The protein belongs to the V-ATPase 116 kDa subunit family. As to quaternary structure, V-ATPase is a heteromultimeric enzyme made up of two complexes: the ATP-hydrolytic V1 complex and the proton translocation V0 complex. The V1 complex consists of three catalytic AB heterodimers that form a heterohexamer, three peripheral stalks each consisting of EG heterodimers, one central rotor including subunits D and F, and the regulatory subunits C and H. The proton translocation complex V0 consists of the proton transport subunit a, a ring of proteolipid subunits c9c'', rotary subunit d, subunits e and f, and the accessory subunits vah-19/Ac45 and vah-20/PRR. Interacts with V-type proton ATPase subunit C vha-11. As to expression, expressed in the H-shaped excretory cell (at protein level). Expressed in hypodermal cells around the vulva. Expressed in the main epidermal syncytium. Expressed in the sheath cells associated with head and tail sensory organs; specifically, expressed in the apical sheath cells of the amphids and CEP neuron and in the sheath cells of the OLQ sensory organ.

The protein localises to the apical cell membrane. It is found in the endosome. It localises to the multivesicular body membrane. In terms of biological role, subunit of the V0 complex of vacuolar(H+)-ATPase (V-ATPase), a multisubunit enzyme composed of a peripheral complex (V1) that hydrolyzes ATP and a membrane integral complex (V0) that translocates protons. V-ATPase is responsible for acidifying and maintaining the pH of intracellular compartments and in some cell types, is targeted to the plasma membrane, where it is responsible for acidifying the extracellular environment. Involved in the assembly of the V-ATPase complex. The V-ATPase is required for the function of the excretory canal. Independently of the V1 complex, the V0 complex of the V-ATPase is required for multivesicular body membrane fusion with the apical membrane of the epidermal cells during exosome release and thus regulates the release of cuticle components such as Hedgehog-related peptide wrt-2 but not collagen. Also, in the epidermis, regulates the trafficking of che-14 and rdy-2. Regulates the secretion of granular material found in the amphid channel and in controlling osmoregulation in the amphid pocket. The polypeptide is V-type proton ATPase 116 kDa subunit a 2 (Caenorhabditis elegans).